We begin with the raw amino-acid sequence, 292 residues long: MLKSTDLKNESEMSRVKVLSEALPYIQKFTGRKIVVKYGGAAMRDSNVKDQVMRDIVLLSCVGIRPIVVHGGGPEINSWLGKLGIEPQFKDGLRVTDASTMEVVEMVLVGKVNKEIVSLINQAGGCAVGLCGKDASLIQARPEGIEGIGFVGEVSNVKIDILQSLVDNGYIPVVSSVATDEQGQAYNLNADTVAGEIAAAMEAEKLILLTDTAGILEDYHNPDSLIVKLDIQEARELIEKGIVSGGMIPKVNCCVRSLAQGVRAAHILDGRVPHVLLQEILTDTGVGSMIVA.

Substrate is bound by residues 72–73 (GG), Arg-94, and Asn-187.

This sequence belongs to the acetylglutamate kinase family. ArgB subfamily.

The protein resides in the cytoplasm. The enzyme catalyses N-acetyl-L-glutamate + ATP = N-acetyl-L-glutamyl 5-phosphate + ADP. It functions in the pathway amino-acid biosynthesis; L-arginine biosynthesis; N(2)-acetyl-L-ornithine from L-glutamate: step 2/4. Its function is as follows. Catalyzes the ATP-dependent phosphorylation of N-acetyl-L-glutamate. This chain is Acetylglutamate kinase, found in Trichodesmium erythraeum (strain IMS101).